The sequence spans 317 residues: tRNA(Ile)-lysidine synthase (317 aa).

30 to 35 is an ATP binding site; it reads SGGSDS.

It belongs to the tRNA(Ile)-lysidine synthase family.

It localises to the cytoplasm. It carries out the reaction cytidine(34) in tRNA(Ile2) + L-lysine + ATP = lysidine(34) in tRNA(Ile2) + AMP + diphosphate + H(+). In terms of biological role, ligates lysine onto the cytidine present at position 34 of the AUA codon-specific tRNA(Ile) that contains the anticodon CAU, in an ATP-dependent manner. Cytidine is converted to lysidine, thus changing the amino acid specificity of the tRNA from methionine to isoleucine. The protein is tRNA(Ile)-lysidine synthase of Chlamydia felis (strain Fe/C-56) (Chlamydophila felis).